Reading from the N-terminus, the 339-residue chain is MVLVQESLILGIETSCDETAAAIVRNGKEILSNIVNSQIDIHQQFGGVVPEVASRKHIENIAGVVHRAFSEAQLAYSAIDAVAVTNRPGLVGALLVGVSFAKAFAYALEKPLIAVNHLHGHIYANFLEHRDIEFPAICLVVSGGHTSLLLMSNPNKMEVLGETRDDAAGEAFDKVARFLGLGYPGGPAIQEAATKGKAGQLQLPRVFLDRNDFEFSFSGLKTAAMNQWNKLQRRGQANVFDMAAEFQAALVEVLVEKSIKAAAKYQVRTIMMAGGVAANQELRNLMKKRTKEAGLKLFYPSLKLCTDNAAMVAANAHYHYGNRSFAPLSLNAYPSLLSL.

Fe cation contacts are provided by histidine 117 and histidine 121. Substrate-binding positions include 140–144 (VVSGG), aspartate 173, glycine 186, and asparagine 279. Aspartate 307 contacts Fe cation.

Belongs to the KAE1 / TsaD family. Fe(2+) serves as cofactor.

The protein localises to the cytoplasm. The enzyme catalyses L-threonylcarbamoyladenylate + adenosine(37) in tRNA = N(6)-L-threonylcarbamoyladenosine(37) in tRNA + AMP + H(+). Required for the formation of a threonylcarbamoyl group on adenosine at position 37 (t(6)A37) in tRNAs that read codons beginning with adenine. Is involved in the transfer of the threonylcarbamoyl moiety of threonylcarbamoyl-AMP (TC-AMP) to the N6 group of A37, together with TsaE and TsaB. TsaD likely plays a direct catalytic role in this reaction. This chain is tRNA N6-adenosine threonylcarbamoyltransferase, found in Syntrophomonas wolfei subsp. wolfei (strain DSM 2245B / Goettingen).